The sequence spans 652 residues: MADVVLDLYAEDLDKDFAGQAQDEFGGDGVDLYDDIGGPTESAASGGGGGGTPSADGAAGPGSGEPGERNSGGPNGVYHQSSGSLTPTMNRRYQLYVGNLTWWTTDQDIANSLRDIGVSDLQEVKFFENRANGQSKGFSVISLGSESSLRAVLDQLPKKEMHGQAPVVTYPSKQALTQFESLQKTRPVPPPQQNGPPRGPAPPSMGGGPMPTGHPGGPQGGGPPGHPPRGMNSIMQPGQYRPQHMSQVPQVGGPNSGPPRMQPPMHPQGGLMGNQQPPPRYPSAQGQWPGQRPGGPRPGPPNGPPQRPMFQGGPMGMPVRGPAGPDWRRPPMHGGFPPQGPPRGLPPAPGPGGPHGAPAPHVNPAFFNQPGGPAQHPGMGGPPHGAPGPQPGMNMPPQQGMNMTPQHGPPPQFAQHGPRGPWPPPQGKPPGPFPDPQQMGPQLTEVEFEEVMSRNRTVSSSAIARAVSDAAAGEYSSAIETLVTAISLIKQSKVAHDERCKILISSLQDTLHGIEAKSYNRRERSRSRERSHRSRQRRERSTSRYRERSRERERDRDRERERDGGSYRERSRSRERERQAPDHYRDDSRSVRPRKSPEPVVAEAAEAPSSKRYYEDRERYRSSDRERRDRDRDRDRERERDRDRREEHRSRH.

The interval 20 to 85 is disordered; it reads QAQDEFGGDG…GVYHQSSGSL (66 aa). The RRM domain occupies 93–173; the sequence is YQLYVGNLTW…QAPVVTYPSK (81 aa). Disordered regions lie at residues 184–440 and 518–652; these read KTRP…QQMG and SYNR…RSRH. Positions 187–203 are enriched in pro residues; sequence PVPPPQQNGPPRGPAPP. The segment covering 205-223 has biased composition (gly residues); it reads MGGGPMPTGHPGGPQGGGP. Pro residues-rich tracts occupy residues 256 to 266, 295 to 307, and 338 to 352; these read SGPPRMQPPMH, GPRP…PPQR, and PQGP…PGPG. Residues 391 to 406 show a composition bias toward low complexity; the sequence is PGMNMPPQQGMNMTPQ. A compositionally biased stretch (pro residues) spans 420 to 435; that stretch reads GPWPPPQGKPPGPFPD. Basic and acidic residues predominate over residues 518-528; it reads SYNRRERSRSR. Basic residues predominate over residues 529–538; the sequence is ERSHRSRQRR. Basic and acidic residues predominate over residues 539-590; the sequence is ERSTSRYRERSRERERDRDRERERDGGSYRERSRSRERERQAPDHYRDDSRS. A Phosphoserine modification is found at serine 596. Positions 598 to 610 are enriched in low complexity; the sequence is EPVVAEAAEAPSS. Residues 612–652 show a composition bias toward basic and acidic residues; the sequence is RYYEDRERYRSSDRERRDRDRDRDRERERDRDRREEHRSRH.

The protein belongs to the RRM CPSF6/7 family.

Its subcellular location is the nucleus. Its function is as follows. May play a role in pre-mRNA 3'-processing. The sequence is that of Cleavage and polyadenylation specificity factor subunit 6 from Drosophila melanogaster (Fruit fly).